Consider the following 177-residue polypeptide: Large ribosomal subunit protein uL10 (177 aa).

It belongs to the universal ribosomal protein uL10 family. In terms of assembly, part of the ribosomal stalk of the 50S ribosomal subunit. The N-terminus interacts with L11 and the large rRNA to form the base of the stalk. The C-terminus forms an elongated spine to which L12 dimers bind in a sequential fashion forming a multimeric L10(L12)X complex.

Its function is as follows. Forms part of the ribosomal stalk, playing a central role in the interaction of the ribosome with GTP-bound translation factors. The protein is Large ribosomal subunit protein uL10 of Mycobacterium leprae (strain Br4923).